A 385-amino-acid chain; its full sequence is tRNA (guanine-N(7)-)-methyltransferase non-catalytic subunit wuho (385 aa).

WD repeat units follow at residues 68 to 108 (KVEV…AKLL), 155 to 194 (GHLSIVYDILWTPDQKHIITSDRDDKIRVTNYPATFDIHS), and 198 to 236 (GHKEFVSGLALLTEEHLLSVSGDKTLRLWNYLSGMELLH).

It belongs to the WD repeat TRM82 family. Forms a heterodimer with the catalytic subunit Mettl1. Interacts with mei-P26 and weakly interacts with bgcn; required for the function or formation of the mei-P26-bgcn-bam-sxl complex. Interacts with nanos; may be involved in mei-P26-dependent derepression of the BMP signaling pathway. Interacts with Myc; the interaction may be mediated by mei-P26 and may be involved in the regulation of ribosome biogenesis. As to expression, in testis, it is present at high level in hub cells, a niche for germline stem cells of testis. Ubiquitously expressed in all testicular cells throughout spermatogenesis. Ubiquitously expressed in all germline and somatic cells of the ovary.

The protein localises to the nucleus. The protein resides in the cytoplasm. It participates in tRNA modification; N(7)-methylguanine-tRNA biosynthesis. Its function is as follows. Required for the Mettl1-dependent formation of N(7)-methylguanine at position 46 (m7G46) in tRNA. In the Mettl1-wuho methyltransferase complex, it is required to stabilize and induce conformational changes of the catalytic subunit. Required for binding of nanos mRNA and repression of translation by the mei-P26-bgcn-bam-sxl complex. May cooperate with mei-P26 and nanos to derepress the BMP signaling pathway. May cooperate with mei-P26 to suppress expression of a subset of microRNAs. May cooperate with mei-P26 to regulate bam expression levels in germline cells during gametogenesis. Required to promote mitosis to meiosis transition during gametogenesis. May regulate germline cell division in part by regulating ribosome biogenesis. This chain is tRNA (guanine-N(7)-)-methyltransferase non-catalytic subunit wuho, found in Drosophila grimshawi (Hawaiian fruit fly).